Consider the following 325-residue polypeptide: Casein kinase I isoform alpha (325 aa).

Residue alanine 2 is modified to N-acetylalanine. Residue serine 4 is modified to Phosphoserine. The residue at position 8 (lysine 8) is an N6-acetyllysine. One can recognise a Protein kinase domain in the interval 17 to 285 (YKLVRKIGSG…YLRQLFRILF (269 aa)). ATP contacts are provided by residues 23–31 (IGSGSFGDI) and lysine 46. Aspartate 136 (proton acceptor) is an active-site residue. Isoleucine 156 is subject to Phosphoserine.

Belongs to the protein kinase superfamily. CK1 Ser/Thr protein kinase family. Casein kinase I subfamily. In terms of assembly, interacts with the Axin complex. Interacts with TUT1, leading to TUT1 phosphorylation. Interacts with FAM83A, FAM83B, FAM83C, FAM83D, FAM83E, FAM83F, FAM83G and FAM83H (via DUF1669). Interaction with FAM83H recruits CSNK1A1 to keratin filaments. Post-translationally, phosphorylated by MTOR in response to mitogenic stimulation, leading to its activation.

It localises to the cytoplasm. Its subcellular location is the cytoskeleton. The protein resides in the microtubule organizing center. It is found in the centrosome. The protein localises to the chromosome. It localises to the centromere. Its subcellular location is the kinetochore. The protein resides in the nucleus speckle. It is found in the cilium basal body. The protein localises to the spindle. The catalysed reaction is L-seryl-[protein] + ATP = O-phospho-L-seryl-[protein] + ADP + H(+). The enzyme catalyses L-threonyl-[protein] + ATP = O-phospho-L-threonyl-[protein] + ADP + H(+). Its function is as follows. Casein kinases are operationally defined by their preferential utilization of acidic proteins such as caseins as substrates. Can phosphorylate a large number of proteins. Participates in Wnt signaling. Phosphorylates CTNNB1 at 'Ser-45'. May phosphorylate PER1 and PER2. May play a role in segregating chromosomes during mitosis. May play a role in keratin cytoskeleton disassembly and thereby, it may regulate epithelial cell migration. Acts as a positive regulator of mTORC1 and mTORC2 signaling in response to nutrients by mediating phosphorylation of DEPTOR inhibitor. Acts as an inhibitor of NLRP3 inflammasome assembly by mediating phosphorylation of NLRP3. This Rattus norvegicus (Rat) protein is Casein kinase I isoform alpha (Csnk1a1).